Consider the following 225-residue polypeptide: PKHD-type hydroxylase YbiX (225 aa).

The region spanning threonine 78 to serine 177 is the Fe2OG dioxygenase domain. Histidine 96, aspartate 98, and histidine 158 together coordinate Fe cation. Arginine 168 is a binding site for 2-oxoglutarate.

Fe(2+) is required as a cofactor. L-ascorbate serves as cofactor.

This chain is PKHD-type hydroxylase YbiX, found in Escherichia coli O45:K1 (strain S88 / ExPEC).